The chain runs to 535 residues: MGSSSKSEKRKYDDGEELLERKKLKLQKKQEKKEKKDKKEKKDKKEKKDKKEKKDKKEKNKESKEAEARDDSGSNVQASSSSSTESTSYGYVQSSKVKDVPQSEVDKFLTDNEVTVEDPQHLHYRPILSFDQIKLQKDVSSKLTKFPKPTPIQSVSWPFLLDGKDVVGVAETGSGKTFAFGVPAINNIITSKNKDLSVLCISPTRELALQIYDNLEDLTRGTDVSCVAIYGGVSKDDQIKKIRNGANVVVATPGRLVDLINDGAVDLSSINYLVLDEADRMLEKGFEEDIKLIIGSTPAQGRQTLMFTATWPKEVRELANNFMNQPVKVTIGDRDELSANKRITQIVEVLDDKFQKEKKLINLLQKYQNTGNGDNKILVFALYKKEASRIESLLHRNKFKVAAIHGDLSQQQRTQALQSFKSGECNLLLATDVAARGLDIPNVKYVINLTFPLTIEDYVHRLGRTGRAGQTGIAHTFFTEDEKHLSGALCNILRGANQPVPEALLKYGGHTKKKTHSVYGAFYKDVDMPIDSKED.

Basic and acidic residues predominate over residues 1 to 21; the sequence is MGSSSKSEKRKYDDGEELLER. The tract at residues 1–96 is disordered; it reads MGSSSKSEKR…TSYGYVQSSK (96 aa). A compositionally biased stretch (basic residues) spans 35–54; it reads KKDKKEKKDKKEKKDKKEKK. A compositionally biased stretch (basic and acidic residues) spans 55–72; sequence DKKEKNKESKEAEARDDS. A compositionally biased stretch (low complexity) spans 79 to 88; that stretch reads SSSSSTESTS. A Q motif motif is present at residues 128–154; that stretch reads LSFDQIKLQKDVSSKLTKFPKPTPIQS. Residues 157-329 enclose the Helicase ATP-binding domain; sequence WPFLLDGKDV…NNFMNQPVKV (173 aa). ATP is bound at residue 170 to 177; sequence AETGSGKT. Residues 276–279 carry the DEAD box motif; the sequence is DEAD. One can recognise a Helicase C-terminal domain in the interval 362–508; sequence NLLQKYQNTG…PVPEALLKYG (147 aa).

The protein belongs to the DEAD box helicase family. DDX5/DBP2 subfamily.

Its subcellular location is the nucleus. The protein resides in the nucleolus. The enzyme catalyses ATP + H2O = ADP + phosphate + H(+). Its function is as follows. ATP-dependent RNA helicase required for 60S ribosomal subunit synthesis. Involved in efficient pre-rRNA processing, predominantly at site A3, which is necessary for the normal formation of 25S and 5.8S rRNAs. The chain is ATP-dependent RNA helicase DBP3 (DBP3) from Lodderomyces elongisporus (strain ATCC 11503 / CBS 2605 / JCM 1781 / NBRC 1676 / NRRL YB-4239) (Yeast).